A 262-amino-acid chain; its full sequence is Acyl-coenzyme A diphosphatase FITM2 (262 aa).

Over 1-23 (MEHLERCAWVLRGTLVRAAVRRY) the chain is Cytoplasmic. A helical membrane pass occupies residues 24–44 (LPWALAASMLAGSLLKELSPL). The Lumenal portion of the chain corresponds to 45-57 (PESYLSNKRNVLN). The helical transmembrane segment at 58-78 (VYFVKVAWAWTFCLLLPFIAL) threads the bilayer. The Cytoplasmic portion of the chain corresponds to 79–93 (TNYHLTGKAGLVLRR). The helical transmembrane segment at 94-114 (LSTLLVGTAIWYVCTAIFSNV) threads the bilayer. Residues 115–145 (EHYTGSCYQSPALEGVRNEPLSKQQCHGQGG) are Lumenal-facing. The chain crosses the membrane as a helical span at residues 146–166 (FWHGFDISGHSFLLTFCALMI). Residue His155 is part of the active site. Residues 167–185 (VEEMAVLHEVKTDRSHCLH) lie on the Cytoplasmic side of the membrane. A helical transmembrane segment spans residues 186 to 206 (VAITALVVALGFLTFIWVWMF). Over 207-218 (LCTAVYFHNLSQ) the chain is Lumenal. His214 is a catalytic residue. A helical transmembrane segment spans residues 219 to 239 (KVFGTLFGLLGWYGTYGFWYL). Residues 240 to 262 (KSFSPGLPPQSCSSNLKQDSYKR) are Cytoplasmic-facing.

The protein belongs to the FIT family. FIT2 subfamily.

It localises to the endoplasmic reticulum membrane. It catalyses the reaction an acyl-CoA + H2O = an acyl-4'-phosphopantetheine + adenosine 3',5'-bisphosphate + 2 H(+). The catalysed reaction is (9Z)-octadecenoyl-CoA + H2O = S-(9Z-octadecenoyl)-4'-phosphopantetheine + adenosine 3',5'-bisphosphate + 2 H(+). The enzyme catalyses (5Z,8Z,11Z,14Z)-eicosatetraenoyl-CoA + H2O = S-(5Z,8Z,11Z,14Z-eicosatetraenoyl)-4'-phosphopantetheine + adenosine 3',5'-bisphosphate + 2 H(+). It carries out the reaction hexadecanoyl-CoA + H2O = S-hexadecanoyl-4'-phosphopantetheine + adenosine 3',5'-bisphosphate + 2 H(+). Fatty acyl-coenzyme A (CoA) diphosphatase that hydrolyzes fatty acyl-CoA to yield acyl-4'-phosphopantetheine and adenosine 3',5'-bisphosphate. Preferentially hydrolyzes unsaturated long-chain acyl-CoA substrates such as oleoyl-CoA/(9Z)-octadecenoyl-CoA and arachidonoyl-CoA/(5Z,8Z,11Z,14Z)-eicosatetraenoyl-CoA in the endoplasmic reticulum (ER) lumen. This catalytic activity is required for maintaining ER structure and for lipid droplets (LDs) biogenesis, which are lipid storage organelles involved in maintaining lipid and energy homeostasis. Directly binds to diacylglycerol (DAGs) and triacylglycerol, which is also important for LD biogenesis. May support directional budding of nacent LDs from the ER into the cytosol by reducing DAG levels at sites of LD formation. Plays a role in the regulation of cell morphology and cytoskeletal organization. The polypeptide is Acyl-coenzyme A diphosphatase FITM2 (Sus scrofa (Pig)).